We begin with the raw amino-acid sequence, 690 residues long: Probable serine/threonine-protein kinase drkB (690 aa).

An N-terminal signal peptide occupies residues methionine 1–serine 24. The disordered stretch occupies residues aspartate 51 to proline 110. The segment covering histidine 57–aspartate 96 has biased composition (low complexity). A compositionally biased stretch (polar residues) spans alanine 97 to proline 107. N-linked (GlcNAc...) asparagine glycosylation is found at asparagine 134, asparagine 180, asparagine 220, and asparagine 250. The segment at threonine 287 to serine 335 is disordered. Positions proline 296–serine 323 are enriched in low complexity. The chain crosses the membrane as a helical span at residues isoleucine 346–isoleucine 366. One can recognise a Protein kinase domain in the interval isoleucine 391–isoleucine 644. ATP contacts are provided by residues isoleucine 397–valine 405 and lysine 418. Aspartate 514 (proton acceptor) is an active-site residue. The segment at phenylalanine 649–asparagine 690 is disordered. Residues asparagine 655 to aspartate 681 show a composition bias toward low complexity.

This sequence belongs to the protein kinase superfamily. TKL Ser/Thr protein kinase family.

Its subcellular location is the membrane. It carries out the reaction L-seryl-[protein] + ATP = O-phospho-L-seryl-[protein] + ADP + H(+). The catalysed reaction is L-threonyl-[protein] + ATP = O-phospho-L-threonyl-[protein] + ADP + H(+). The sequence is that of Probable serine/threonine-protein kinase drkB (drkB) from Dictyostelium discoideum (Social amoeba).